A 451-amino-acid chain; its full sequence is Target of rapamycin complex 1 subunit tco89 (451 aa).

The disordered stretch occupies residues 1-35 (MERPSLSRRTSSSTVSTDGEGVYSRSTKERKRNFI). Residues 7-17 (SRRTSSSTVST) show a composition bias toward low complexity. Position 70 is a phosphoserine (S70). Disordered regions lie at residues 122–164 (WDDA…PVTR), 176–264 (INSN…GNSL), and 362–437 (NQNF…DTDY). Residues 129–162 (NDSTAGNLDSDSALPTPSVTTNEAADSSRASSPV) show a composition bias toward polar residues. Residues 203-215 (DDSAADASTTKSS) show a composition bias toward low complexity. Composition is skewed to polar residues over residues 228–242 (HSNN…NQPK), 362–376 (NQNF…TSAA), and 407–417 (QSASLNASMSA). Over residues 419-430 (SHARQRSIHVPK) the composition is skewed to basic residues.

Belongs to the TORC subunit TCO89 family. The target of rapamycin complex 1 (TORC1) is composed of at least mip1, pop3/wat1, tco89, toc1 and tor2. Post-translationally, either Thr-10, Ser-11, Ser-12, Ser-13 or Thr-14 and Ser-214 or Ser-215 and Ser-247 or Ser-249 are phosphorylated as well.

It is found in the cytoplasm. Functionally, component of TORC1, which regulates multiple cellular processes to control cell growth in response to environmental signals. Tor2 is essential for growth. Nutrient limitation and environmental stress signals cause inactivation of TORC1. Active TORC1 positively controls cell growth and ribosome biogenesis by regulating ribosomal protein gene expression. TORC1 negatively controls G1 cell-cycle arrest, sexual development and amino acid uptake. Represses mating, meiosis and sporulation efficiency by interfering with the functions of the transcription factor ste11 and the meiosis-promoting RNA-binding protein mei2. This Schizosaccharomyces pombe (strain 972 / ATCC 24843) (Fission yeast) protein is Target of rapamycin complex 1 subunit tco89.